Consider the following 267-residue polypeptide: Glutamate 5-kinase (267 aa).

ATP is bound at residue lysine 14. The substrate site is built by serine 54, aspartate 141, and asparagine 157. ATP-binding positions include 177–178 and 219–225; these read SD and TGGMMSK.

The protein belongs to the glutamate 5-kinase family.

The protein localises to the cytoplasm. It carries out the reaction L-glutamate + ATP = L-glutamyl 5-phosphate + ADP. It functions in the pathway amino-acid biosynthesis; L-proline biosynthesis; L-glutamate 5-semialdehyde from L-glutamate: step 1/2. Functionally, catalyzes the transfer of a phosphate group to glutamate to form L-glutamate 5-phosphate. The polypeptide is Glutamate 5-kinase (Streptococcus thermophilus).